Consider the following 465-residue polypeptide: Histidine--tRNA ligase (465 aa).

It belongs to the class-II aminoacyl-tRNA synthetase family. As to quaternary structure, homodimer.

The protein resides in the cytoplasm. It carries out the reaction tRNA(His) + L-histidine + ATP = L-histidyl-tRNA(His) + AMP + diphosphate + H(+). This is Histidine--tRNA ligase (hisS) from Pelagibacter ubique (strain HTCC1062).